The sequence spans 379 residues: ATP-sensitive inward rectifier potassium channel 10 (379 aa).

The Cytoplasmic portion of the chain corresponds to 1-61 (MTSVAKVYYS…LKDLWTTFID (61 aa)). Arg36 lines the 1,2-dioctanoyl-sn-glycero-3-phospho-(1D-myo-inositol-4,5-bisphosphate) pocket. Residues 62–88 (MQWRYKLLLFSATFAGTWFLFGVVWYL) form a helical membrane-spanning segment. The Extracellular portion of the chain corresponds to 89 to 114 (VAVAHGDLLELGPPANHTPCVVQVHT). An intrachain disulfide couples Cys108 to Cys140. An intramembrane region (discontinuously helical; Pore-forming) is located at residues 115 to 131 (LTGAFLFSLESQTTIGY). The Selectivity filter signature appears at 128–133 (TIGYGF). Over 132–140 (GFRYISEEC) the chain is Extracellular. A helical transmembrane segment spans residues 141 to 166 (PLAIVLLIAQLVLTTILEIFITGTFL). At 167–379 (AKIARPKKRA…SALSVRISNV (213 aa)) the chain is on the cytoplasmic side. The 1,2-dioctanoyl-sn-glycero-3-phospho-(1D-myo-inositol-4,5-bisphosphate) site is built by Lys168, Arg171, and Lys173. 210-217 (GCQVTGKL) is an ATP binding site.

The protein belongs to the inward rectifier-type potassium channel (TC 1.A.2.1) family. KCNJ10 subfamily. As to quaternary structure, homotetramer. In kidney cells, it forms heteromeric channels with Kir5.1/KCNJ16; this interaction is required for KCNJ16 localization to the basolateral membrane. Interacts with MAGI1, alone and possibly as a heteromer with KCNJ16; this interaction may facilitate KCNJ10/KCNJ16 potassium channel expression at the basolateral membrane in kidney cells. Interacts with PATJ. In terms of tissue distribution, predominantly expressed in the brain, including in glial cells of the cerebellum and forebrain. Expressed at lower levels in the kidney, and other peripheral tissues.

It localises to the membrane. The protein resides in the basolateral cell membrane. The catalysed reaction is K(+)(in) = K(+)(out). Its activity is regulated as follows. Channel activity is strongly regulated by variations of cytosolic pH; channels are activated by alkaline and inhibited by acidic pH values. Activated by phosphatidylinositol 4,5 biphosphate (PtdIns(4,5)P2). Inhibited by Ba(2+) and Cs(+). Its function is as follows. May be responsible for potassium buffering action of glial cells in the brain. Inward rectifier potassium channels are characterized by a greater tendency to allow potassium to flow into the cell rather than out of it. Their voltage dependence is regulated by the concentration of extracellular potassium; as external potassium is raised, the voltage range of the channel opening shifts to more positive voltages. The inward rectification is mainly due to the blockage of outward current by internal magnesium. Can be blocked by extracellular barium and cesium. In the kidney, together with KCNJ16, mediates basolateral K(+) recycling in distal tubules; this process is critical for Na(+) reabsorption at the tubules. This Rattus norvegicus (Rat) protein is ATP-sensitive inward rectifier potassium channel 10.